The following is a 512-amino-acid chain: Serine/threonine-protein kinase grp (512 aa).

Residues Trp-22–Cys-279 form the Protein kinase domain. ATP-binding positions include Leu-28 to Val-36 and Lys-51. Asp-143 serves as the catalytic Proton acceptor. The tract at residues Pro-335 to Gln-360 is disordered.

This sequence belongs to the protein kinase superfamily. CAMK Ser/Thr protein kinase family. NIM1 subfamily. In terms of processing, phosphorylated in a MEI-41/ATR dependent manner in response to DNA damage or the presence of unreplicated DNA.

It is found in the nucleus. It carries out the reaction L-seryl-[protein] + ATP = O-phospho-L-seryl-[protein] + ADP + H(+). The catalysed reaction is L-threonyl-[protein] + ATP = O-phospho-L-threonyl-[protein] + ADP + H(+). Functionally, serine/threonine-protein kinase which is required for checkpoint-mediated cell cycle arrest and activation of DNA repair in response to the presence of DNA damage or unreplicated DNA. May also negatively regulate cell cycle progression during unperturbed cell cycles. May phosphorylate the CDC25 phosphatase stg, which promotes its degradation. This results in increased inhibitory tyrosine phosphorylation of Cdk1-cyclin complexes and consequent inhibition of cell cycle progression. This Drosophila melanogaster (Fruit fly) protein is Serine/threonine-protein kinase grp.